The following is a 418-amino-acid chain: Tyrosine--tRNA ligase (418 aa).

An L-tyrosine-binding site is contributed by Tyr34. The 'HIGH' region motif lies at 39–48; sequence PTADSLHLGH. L-tyrosine is bound by residues Tyr169 and Gln173. The 'KMSKS' region signature appears at 229 to 233; it reads KFGKS. Lys232 contacts ATP. One can recognise an S4 RNA-binding domain in the interval 352–418; sequence HNIVEILVAA…GKKKYAVLTY (67 aa).

The protein belongs to the class-I aminoacyl-tRNA synthetase family. TyrS type 1 subfamily. In terms of assembly, homodimer.

The protein resides in the cytoplasm. It carries out the reaction tRNA(Tyr) + L-tyrosine + ATP = L-tyrosyl-tRNA(Tyr) + AMP + diphosphate + H(+). Functionally, catalyzes the attachment of tyrosine to tRNA(Tyr) in a two-step reaction: tyrosine is first activated by ATP to form Tyr-AMP and then transferred to the acceptor end of tRNA(Tyr). The polypeptide is Tyrosine--tRNA ligase (Streptococcus pyogenes serotype M1).